A 79-amino-acid polypeptide reads, in one-letter code: uncharacterized protein (79 aa).

The segment at 1–37 (MQLDVFSRMMFGDAAKPTEEKEEEQQEEVSQVSQTND) is disordered.

This is an uncharacterized protein from Bacillus subtilis (strain 168).